The sequence spans 2493 residues: Polyprotein P1234 (2493 aa).

The Alphavirus-like MT domain maps to E28 to H259. The interval G244–V263 is nsP1 membrane-binding. C419 is lipidated: S-palmitoyl cysteine; by host. Residues E690–K841 enclose the (+)RNA virus helicase ATP-binding domain. G721 to S728 is a binding site for a ribonucleoside 5'-triphosphate. Positions S842–A990 constitute a (+)RNA virus helicase C-terminal domain. Residues D1003–S1322 form the Peptidase C9 domain. Residues V1004 to T1023 are nucleolus localization signal. C1012 (for cysteine protease nsP2 activity) is an active-site residue. The short motif at V1056 to S1065 is the Nuclear export signal element. The For cysteine protease nsP2 activity role is filled by H1081. The Nuclear localization signal motif lies at P1179 to V1183. Residues A1330–E1489 enclose the Macro domain. Residues D1339, N1353, G1361, G1441, I1442, and F1443 each coordinate ADP-D-ribose. C1596, C1598, C1621, and C1639 together coordinate Zn(2+). Disordered stretches follow at residues P1664–Q1684 and A1790–P1826. The segment covering R1814–S1823 has biased composition (polar residues). A run of 2 repeats spans residues R1818–A1839 and R1852–A1873. Positions R1818 to A1873 are 2 X 21 AA approximate repeats, binding to host FXR family members. In terms of domain architecture, RdRp catalytic spans D2250–A2365.

In terms of assembly, interacts with non-structural protein 3. Interacts with RNA-directed RNA polymerase nsP4. Interacts with protease nsP2. interacts with itself. As to quaternary structure, interacts with mRNA-capping enzyme nsP1. Interacts with host DDX1. Interacts with host DDX3. Interacts (via C-terminus) with host FXR1; this interaction inhibits the formation of host stress granules on viral mRNAs and the nsp3-FXR1 complexes bind viral RNAs and probably orchestrate the assembly of viral replication complexes. Interacts (via C-terminus) with host FXR2; this interaction inhibits the formation of host stress granules on viral mRNAs and the nsp3-FXR2 complexes bind viral RNAs and probably orchestrate the assembly of viral replication complexes. Interacts (via C-terminus) with host FMR1; this interaction inhibits the formation of host stress granules on viral mRNAs and the nsp3-FMR1 complexes bind viral RNAs and probably orchestrate the assembly of viral replication complexes. Interacts with mRNA-capping enzyme nsP1. Interacts with protease nsP2. interacts with itself. In terms of assembly, interacts with RNA-directed RNA polymerase nsP4. Interacts with mRNA-capping enzyme nsP1. Interacts with KPNA1/karyopherin-alpha1; this interaction probably allows the active transport of protease nsP2 into the host nucleus. It depends on Mg(2+) as a cofactor. The cofactor is Mn(2+). Specific enzymatic cleavages in vivo yield mature proteins. The processing of the polyprotein is temporally regulated. In early stages (1.7 hpi), P1234 is first cleaved in trans through its nsP2 protease activity, releasing P123' and nsP4, which associate to form the early replication complex. At the same time, P1234 is also cut at the nsP1/nsP2 site early in infection but with lower efficiency. After replication of the viral minus-strand RNAs (4 hpi), the polyproteins are cut at the nsP1/nsP2 and nsP2/nsP3 sites very efficiently, preventing accumulation of P123' and P1234 and allowing the formation of the late replication complex. NsP3'/nsP4 site is not cleaved anymore and P34 is produced rather than nsP4. In terms of processing, specific enzymatic cleavages in vivo yield mature proteins. The processing of the polyprotein is temporally regulated. In early stages (1.7 hpi), P123 is cleaved at the nsP1/nsP2 site with low efficiency. After replication of the viral minus-strand RNAs (4 hpi), the polyproteins are cut at the nsP1/nsP2 and nsP2/nsP3 sites very efficiently, preventing accumulation of P123 and allowing the formation of the late replication complex. Post-translationally, specific enzymatic cleavages in vivo yield mature proteins. The processing of the polyprotein is temporally regulated. In early stages (1.7 hpi), P123' is cleaved at the nsP1/nsP2 site with low efficiency. After replication of the viral minus-strand RNAs (4 hpi), the polyproteins are cut at the nsP1/nsP2 and nsP2/nsP3 sites very efficiently, preventing accumulation of P123' and allowing the formation of the late replication complex. Palmitoylated by host palmitoyltransferases ZDHHC2 and ZDHHC19. In terms of processing, phosphorylated by host on serines and threonines. Post-translationally, ubiquitinated; targets the protein for rapid degradation via the ubiquitin system. Nsp4 is present in extremely low quantities due to low frequency of translation through the amber stop-codon and the degradation by the ubiquitin pathway.

Its subcellular location is the host cytoplasmic vesicle membrane. It localises to the host cell membrane. The protein resides in the host cell projection. The protein localises to the host filopodium. It is found in the host nucleus. Its subcellular location is the host cytoplasm. It carries out the reaction GTP + S-adenosyl-L-methionine = N(7)-methyl-GTP + S-adenosyl-L-homocysteine. The catalysed reaction is N(7)-methyl-GTP + L-histidyl-[protein] = N(tele)-(N(7)-methylguanosine 5'-phospho)-L-histidyl-[protein] + diphosphate. The enzyme catalyses N(tele)-(N(7)-methylguanosine 5'-phospho)-L-histidyl-[protein] + a 5'-end diphospho-(purine-ribonucleoside) in mRNA + H(+) = a 5'-end (N(7)-methyl 5'-triphosphoguanosine)-(purine-ribonucleoside) in mRNA + L-histidyl-[protein]. It catalyses the reaction a 5'-end triphospho-ribonucleoside in mRNA + H2O = a 5'-end diphospho-ribonucleoside in mRNA + phosphate + H(+). It carries out the reaction a ribonucleoside 5'-triphosphate + H2O = a ribonucleoside 5'-diphosphate + phosphate + H(+). The catalysed reaction is ATP + H2O = ADP + phosphate + H(+). The enzyme catalyses RNA(n) + a ribonucleoside 5'-triphosphate = RNA(n+1) + diphosphate. It catalyses the reaction 4-O-(ADP-D-ribosyl)-L-aspartyl-[protein] + H2O = L-aspartyl-[protein] + ADP-D-ribose + H(+). It carries out the reaction 5-O-(ADP-D-ribosyl)-L-glutamyl-[protein] + H2O = L-glutamyl-[protein] + ADP-D-ribose + H(+). The catalysed reaction is RNA(n) + ATP = RNA(n)-3'-adenine ribonucleotide + diphosphate. The enzyme catalyses ADP-alpha-D-ribose 1''-phosphate + H2O = ADP-D-ribose + phosphate. Inhibited by sinefungin. Functionally, inactive precursor of the viral replicase, which is activated by cleavages carried out by the viral protease nsP2. Its function is as follows. The early replication complex formed by the polyprotein P123 and nsP4 synthesizes the minus-strand RNAs (antigenome). Polyprotein P123 is a short-lived polyprotein that accumulates during early stage of infection. As soon P123 is cleaved into mature proteins, the plus-strand RNAs synthesis begins. In terms of biological role, the early replication complex formed by the polyprotein P123' and nsP4 synthesizes minus-strand RNAs (antigenome). Polyprotein P123' is a short-lived polyprotein that accumulates during early stage of infection. As soon P123' is cleaved into mature proteins, the plus-strand RNAs synthesis begins. Cytoplasmic capping enzyme that catalyzes two virus-specific reactions: methyltransferase and nsP1 guanylyltransferase. mRNA-capping is necessary since all viral RNAs are synthesized in the cytoplasm, and host capping enzymes are restricted to the nucleus. The enzymatic reaction involves a covalent link between 7-methyl-GMP and nsP1, whereas eukaryotic capping enzymes form a covalent complex only with GMP. NsP1 capping consists in the following reactions: GTP is first methylated into 7-methyl-GMP and then is covalently linked to nsP1 to form the m7GMp-nsP1 complex from which 7-methyl-GMP complex is transferred to the mRNA to create the cap structure. NsP1 is also needed for the initiation of the minus-strand RNAs synthesis. Probably serves as a membrane anchor for the replication complex composed of nsP1-nsP4. Nsp1 is needed for the initiation of the minus-strand RNAs synthesis. Palmitoylated nsP1 is remodeling host cell cytoskeleton, and induces filopodium-like structure formation at the surface of the host cell. Functionally, multifunctional protein whose N-terminus is part of the RNA polymerase complex and displays NTPase, RNA triphosphatase and helicase activities. NTPase and RNA triphosphatase are involved in viral RNA capping and helicase keeps a check on the dsRNA replication intermediates. The C-terminus harbors a protease that specifically cleaves the polyproteins and releases the mature proteins. Required for the shutoff of minus-strand RNAs synthesis. Inhibits host translation to ensure maximal viral gene expression and evade host immune response. Its function is as follows. Seems to be essential for minus-strand RNAs and subgenomic 26S mRNAs synthesis. Displays mono-ADP-ribosylhydrolase activity. ADP-ribosylation is a post-translational modification that controls various processes of the host cell and the virus probably needs to revert it for optimal viral replication. Binds proteins of FXR family and sequesters them into the viral RNA replication complexes thereby inhibiting the formation of host stress granules on viral mRNAs. The nsp3-FXR complexes bind viral RNAs and probably orchestrate the assembly of viral replication complexes, thanks to the ability of FXR family members to self-assemble and bind DNA. In terms of biological role, seems to be essential for minus-strand RNAs and subgenomic 26S mRNAs synthesis. Displays mono-ADP-ribosylhydrolase activity. ADP-ribosylation is a post-translational modification that controls various processes of the host cell and the virus probably needs to revert it for optimal viral replication. Binds proteins of FXR family and sequesters them into the viral RNA replication complexes thereby inhibiting the formation of host stress granules on viral mRNAs. The nsp3'-FXR complexes bind viral RNAs and probably orchestrate the assembly of viral replication complexes, thanks to the ability of FXR family members to self-assemble and bind DNA. RNA dependent RNA polymerase. Replicates genomic and antigenomic RNA by recognizing replications specific signals. The early replication complex formed by the polyprotein P123 and nsP4 synthesizes minus-strand RNAs. The late replication complex composed of fully processed nsP1-nsP4 is responsible for the production of genomic and subgenomic plus-strand RNAs. In Bos taurus (Bovine), this protein is Polyprotein P1234.